The following is a 161-amino-acid chain: Protein-export protein SecB (161 aa).

The protein belongs to the SecB family. As to quaternary structure, homotetramer, a dimer of dimers. One homotetramer interacts with 1 SecA dimer.

It is found in the cytoplasm. In terms of biological role, one of the proteins required for the normal export of preproteins out of the cell cytoplasm. It is a molecular chaperone that binds to a subset of precursor proteins, maintaining them in a translocation-competent state. It also specifically binds to its receptor SecA. The polypeptide is Protein-export protein SecB (Shewanella sp. (strain MR-7)).